We begin with the raw amino-acid sequence, 269 residues long: 4-hydroxy-tetrahydrodipicolinate reductase (269 aa).

Residues 8–13 (GAAGRM), Glu-34, 98–100 (GTT), and 122–125 (APNY) each bind NAD(+). His-155 (proton donor/acceptor) is an active-site residue. Residue His-156 participates in (S)-2,3,4,5-tetrahydrodipicolinate binding. The active-site Proton donor is Lys-159. 165-166 (GT) serves as a coordination point for (S)-2,3,4,5-tetrahydrodipicolinate.

The protein belongs to the DapB family.

It localises to the cytoplasm. The catalysed reaction is (S)-2,3,4,5-tetrahydrodipicolinate + NAD(+) + H2O = (2S,4S)-4-hydroxy-2,3,4,5-tetrahydrodipicolinate + NADH + H(+). The enzyme catalyses (S)-2,3,4,5-tetrahydrodipicolinate + NADP(+) + H2O = (2S,4S)-4-hydroxy-2,3,4,5-tetrahydrodipicolinate + NADPH + H(+). The protein operates within amino-acid biosynthesis; L-lysine biosynthesis via DAP pathway; (S)-tetrahydrodipicolinate from L-aspartate: step 4/4. Functionally, catalyzes the conversion of 4-hydroxy-tetrahydrodipicolinate (HTPA) to tetrahydrodipicolinate. The chain is 4-hydroxy-tetrahydrodipicolinate reductase from Aliivibrio salmonicida (strain LFI1238) (Vibrio salmonicida (strain LFI1238)).